The sequence spans 615 residues: Nuclear cap-binding protein subunit 3 (615 aa).

Lys12 is covalently cross-linked (Glycyl lysine isopeptide (Lys-Gly) (interchain with G-Cter in SUMO2)). Residues 15-27 (APAGPALGLPSPE) show a composition bias toward low complexity. The segment at 15-43 (APAGPALGLPSPEVESGLERGEPEPMEVE) is disordered. Ser25 is subject to Phosphoserine. Lys70 participates in a covalent cross-link: Glycyl lysine isopeptide (Lys-Gly) (interchain with G-Cter in SUMO2). Ser73 is subject to Phosphoserine. Residues 126–187 (ETIYICGVDE…MSSLPAQDKM (62 aa)) form an RNA recognition motif (RRM) domain region. The WLDD motif; essential for 7-methylguanosine-containing mRNA cap binding motif lies at 155–158 (WLDD). 2 disordered regions span residues 182-233 (PAQD…LDTL) and 332-400 (HSGL…MDYD). The segment covering 185-208 (DKMRSRDASEDKSSEKNKKDKQED) has biased composition (basic and acidic residues). A Glycyl lysine isopeptide (Lys-Gly) (interchain with G-Cter in SUMO2) cross-link involves residue Lys186. Residues Ser209 and Ser210 each carry the phosphoserine modification. Composition is skewed to acidic residues over residues 209–230 (SSDDDETEEGEVEDENSSDVEL) and 341–360 (EPIEEEEEEEEEEEDQDMDA). Over residues 361-383 (DDRVVVEYHEELPGLKQPRERSL) the composition is skewed to basic and acidic residues. Thr408 is modified (phosphothreonine). Ser410 carries the post-translational modification Phosphoserine. 2 disordered regions span residues 430–454 (SIRNPMRADSISTSNIKNRIGNKLP) and 467–615 (EKRQ…EAES). A compositionally biased stretch (basic and acidic residues) spans 506–516 (VRREPSSDVHS). Residue Lys536 forms a Glycyl lysine isopeptide (Lys-Gly) (interchain with G-Cter in SUMO2) linkage. 2 stretches are compositionally biased toward basic and acidic residues: residues 549-564 (KTKEKNTKKVDHRASG) and 580-593 (IKEKEESRQKKSRL). The residue at position 563 (Ser563) is a Phosphoserine. A compositionally biased stretch (low complexity) spans 606 to 615 (ESSSGSEAES). At Ser615 the chain carries Phosphoserine.

Belongs to the NCBP3 family. As to quaternary structure, component of an alternative cap-binding complex (CBC) composed of NCBP1/CBP80 and NCBP3. Interacts with SRRT, KPNA3, THOC5 and EIF4A3.

It is found in the nucleus. The protein localises to the cytoplasm. Its function is as follows. Associates with NCBP1/CBP80 to form an alternative cap-binding complex (CBC) which plays a key role in mRNA export. NCBP3 serves as adapter protein linking the capped RNAs (m7GpppG-capped RNA) to NCBP1/CBP80. Unlike the conventional CBC with NCBP2 which binds both small nuclear RNA (snRNA) and messenger (mRNA) and is involved in their export from the nucleus, the alternative CBC with NCBP3 does not bind snRNA and associates only with mRNA thereby playing a role in only mRNA export. The alternative CBC is particularly important in cellular stress situations such as virus infections and the NCBP3 activity is critical to inhibit virus growth. The polypeptide is Nuclear cap-binding protein subunit 3 (Mus musculus (Mouse)).